A 461-amino-acid chain; its full sequence is GTPase Der (461 aa).

EngA-type G domains follow at residues 2–166 (IKVA…PKKP) and 199–370 (IKVA…KNYS). GTP contacts are provided by residues 8–15 (GKPNVGKS), 57–61 (DTGGL), 118–121 (NKID), 205–212 (GRVNVGKS), 252–256 (DTAGI), and 316–319 (NKWD). In terms of domain architecture, KH-like spans 371 to 455 (KRIPTATLNK…PIIFVARKKG (85 aa)).

Belongs to the TRAFAC class TrmE-Era-EngA-EngB-Septin-like GTPase superfamily. EngA (Der) GTPase family. Associates with the 50S ribosomal subunit.

In terms of biological role, GTPase that plays an essential role in the late steps of ribosome biogenesis. The sequence is that of GTPase Der from Nautilia profundicola (strain ATCC BAA-1463 / DSM 18972 / AmH).